The sequence spans 187 residues: Putative glutathione-dependent formaldehyde-activating enzyme (187 aa).

Positions 20–166 (FPGGKLYCHC…FESVGLKTYD (147 aa)) constitute a CENP-V/GFA domain. Positions 27, 29, 48, 50, 53, 95, and 98 each coordinate Zn(2+).

The protein belongs to the Gfa family. Zn(2+) serves as cofactor.

It catalyses the reaction S-(hydroxymethyl)glutathione = glutathione + formaldehyde. It functions in the pathway one-carbon metabolism; formaldehyde degradation; formate from formaldehyde (glutathione route): step 1/3. Its function is as follows. Catalyzes the condensation of formaldehyde and glutathione to S-hydroxymethylglutathione. This Talaromyces marneffei (strain ATCC 18224 / CBS 334.59 / QM 7333) (Penicillium marneffei) protein is Putative glutathione-dependent formaldehyde-activating enzyme.